We begin with the raw amino-acid sequence, 172 residues long: Shikimate kinase (172 aa).

14 to 19 (GAGKST) is a binding site for ATP. Position 18 (Ser-18) interacts with Mg(2+). The substrate site is built by Asp-36, Arg-60, and Gly-82. Residue Arg-120 participates in ATP binding. Arg-139 contacts substrate. Gln-156 is a binding site for ATP.

This sequence belongs to the shikimate kinase family. Monomer. It depends on Mg(2+) as a cofactor.

It is found in the cytoplasm. The catalysed reaction is shikimate + ATP = 3-phosphoshikimate + ADP + H(+). Its pathway is metabolic intermediate biosynthesis; chorismate biosynthesis; chorismate from D-erythrose 4-phosphate and phosphoenolpyruvate: step 5/7. Functionally, catalyzes the specific phosphorylation of the 3-hydroxyl group of shikimic acid using ATP as a cosubstrate. The protein is Shikimate kinase of Vibrio vulnificus (strain CMCP6).